Reading from the N-terminus, the 297-residue chain is N-acetylneuraminate lyase (297 aa).

Residues Ser47 and Thr48 each coordinate aceneuramate. Catalysis depends on Tyr137, which acts as the Proton donor. Lys165 functions as the Schiff-base intermediate with substrate in the catalytic mechanism. Aceneuramate contacts are provided by Thr167, Gly189, Asp191, Glu192, and Ser208.

The protein belongs to the DapA family. NanA subfamily. As to quaternary structure, homotetramer.

It localises to the cytoplasm. The catalysed reaction is aceneuramate = aldehydo-N-acetyl-D-mannosamine + pyruvate. It functions in the pathway amino-sugar metabolism; N-acetylneuraminate degradation; D-fructose 6-phosphate from N-acetylneuraminate: step 1/5. Its function is as follows. Catalyzes the reversible aldol cleavage of N-acetylneuraminic acid (sialic acid; Neu5Ac) to form pyruvate and N-acetylmannosamine (ManNAc) via a Schiff base intermediate. This chain is N-acetylneuraminate lyase, found in Escherichia coli O139:H28 (strain E24377A / ETEC).